The chain runs to 528 residues: Probable serine protease HtrA1 (528 aa).

The tract at residues 1–70 (MDTRVDTDNA…RPSGVQGSFV (70 aa)) is disordered. Over 1-178 (MDTRVDTDNA…DVLFGGKVSY (178 aa)) the chain is Cytoplasmic. The span at 31–40 (NNGGPNGGGR) shows a compositional bias: gly residues. The chain crosses the membrane as a helical span at residues 179–199 (LALGILVAIALVIGGIGGVIG). Over 200-528 (RKTAEVVDAF…LTVKPDPDST (329 aa)) the chain is Periplasmic. Catalysis depends on charge relay system residues His270, Asp306, and Ser387. Residues 426–487 (LVANSLIKDG…VIVKVGNRAV (62 aa)) form the PDZ domain.

This sequence belongs to the peptidase S1C family. As to quaternary structure, the C-terminal region exhibits both monomeric and trimeric forms in solution.

It localises to the cell inner membrane. The catalysed reaction is Acts on substrates that are at least partially unfolded. The cleavage site P1 residue is normally between a pair of hydrophobic residues, such as Val-|-Val.. Essential protein that may act as a regulatory protease that is conditionally activated upon appropriate environmental triggers. This Mycobacterium tuberculosis (strain ATCC 25618 / H37Rv) protein is Probable serine protease HtrA1.